The chain runs to 291 residues: BTB/POZ domain-containing protein 19 (291 aa).

Positions 29–98 (SDVCFVVGQE…LYTNSVKLYR (70 aa)) constitute a BTB domain. The region spanning 134–234 (CEALQVAVTF…LALLAPAELS (101 aa)) is the BACK domain.

The protein is BTB/POZ domain-containing protein 19 (BTBD19) of Homo sapiens (Human).